We begin with the raw amino-acid sequence, 200 residues long: dITP/XTP pyrophosphatase (200 aa).

8-13 (THNPNK) serves as a coordination point for substrate. 2 residues coordinate Mg(2+): Glu41 and Asp71. Asp71 functions as the Proton acceptor in the catalytic mechanism. Residues Thr72, 153 to 156 (FGYD), Lys176, and 181 to 182 (HR) each bind substrate.

The protein belongs to the HAM1 NTPase family. As to quaternary structure, homodimer. Requires Mg(2+) as cofactor.

The enzyme catalyses XTP + H2O = XMP + diphosphate + H(+). It catalyses the reaction dITP + H2O = dIMP + diphosphate + H(+). It carries out the reaction ITP + H2O = IMP + diphosphate + H(+). Functionally, pyrophosphatase that catalyzes the hydrolysis of nucleoside triphosphates to their monophosphate derivatives, with a high preference for the non-canonical purine nucleotides XTP (xanthosine triphosphate), dITP (deoxyinosine triphosphate) and ITP. Seems to function as a house-cleaning enzyme that removes non-canonical purine nucleotides from the nucleotide pool, thus preventing their incorporation into DNA/RNA and avoiding chromosomal lesions. The chain is dITP/XTP pyrophosphatase from Caldanaerobacter subterraneus subsp. tengcongensis (strain DSM 15242 / JCM 11007 / NBRC 100824 / MB4) (Thermoanaerobacter tengcongensis).